Reading from the N-terminus, the 536-residue chain is Phosphoenolpyruvate carboxykinase (ATP) (536 aa).

Residues Arg61, Tyr195, and Lys201 each contribute to the substrate site. Residues Lys201, His220, and Gly236 to Thr244 each bind ATP. 2 residues coordinate Mn(2+): Lys201 and His220. Asp257 serves as a coordination point for Mn(2+). Residues Glu285, Arg322, and Thr447 each contribute to the ATP site. Residue Arg322 participates in substrate binding.

The protein belongs to the phosphoenolpyruvate carboxykinase (ATP) family. It depends on Mn(2+) as a cofactor.

It is found in the cytoplasm. The catalysed reaction is oxaloacetate + ATP = phosphoenolpyruvate + ADP + CO2. It functions in the pathway carbohydrate biosynthesis; gluconeogenesis. In terms of biological role, involved in the gluconeogenesis. Catalyzes the conversion of oxaloacetate (OAA) to phosphoenolpyruvate (PEP) through direct phosphoryl transfer between the nucleoside triphosphate and OAA. The polypeptide is Phosphoenolpyruvate carboxykinase (ATP) (Mesorhizobium japonicum (strain LMG 29417 / CECT 9101 / MAFF 303099) (Mesorhizobium loti (strain MAFF 303099))).